We begin with the raw amino-acid sequence, 174 residues long: Crossover junction endodeoxyribonuclease RuvC (174 aa).

Residues Asp8, Glu69, and Asp141 contribute to the active site. Residues Asp8, Glu69, and Asp141 each contribute to the Mg(2+) site.

Belongs to the RuvC family. Homodimer which binds Holliday junction (HJ) DNA. The HJ becomes 2-fold symmetrical on binding to RuvC with unstacked arms; it has a different conformation from HJ DNA in complex with RuvA. In the full resolvosome a probable DNA-RuvA(4)-RuvB(12)-RuvC(2) complex forms which resolves the HJ. It depends on Mg(2+) as a cofactor.

Its subcellular location is the cytoplasm. It catalyses the reaction Endonucleolytic cleavage at a junction such as a reciprocal single-stranded crossover between two homologous DNA duplexes (Holliday junction).. The RuvA-RuvB-RuvC complex processes Holliday junction (HJ) DNA during genetic recombination and DNA repair. Endonuclease that resolves HJ intermediates. Cleaves cruciform DNA by making single-stranded nicks across the HJ at symmetrical positions within the homologous arms, yielding a 5'-phosphate and a 3'-hydroxyl group; requires a central core of homology in the junction. The consensus cleavage sequence is 5'-(A/T)TT(C/G)-3'. Cleavage occurs on the 3'-side of the TT dinucleotide at the point of strand exchange. HJ branch migration catalyzed by RuvA-RuvB allows RuvC to scan DNA until it finds its consensus sequence, where it cleaves and resolves the cruciform DNA. The polypeptide is Crossover junction endodeoxyribonuclease RuvC (Xanthomonas axonopodis pv. citri (strain 306)).